Consider the following 206-residue polypeptide: Twist-related protein 1 (206 aa).

Residues 1 to 18 (MMQDVSSSPVSPADDSLS) are compositionally biased toward low complexity. Residues 1-109 (MMQDVSSSPV…GGGSPQSYEE (109 aa)) are disordered. Residues 34 to 43 (RGARKRRSSR) show a composition bias toward basic residues. Gly residues-rich tracts occupy residues 48 to 65 (GSAG…GGDE) and 78 to 103 (SAGG…GGGS). The region spanning 112-163 (TQRVMANVRERQRTQSLNEAFAALRKIIPTLPSDKLSKIQTLKLAARYIDFL) is the bHLH domain. The sufficient for transactivation activity stretch occupies residues 165–195 (QVLQSDELDSKMASCSYVAHERLSYAFSVWR).

In terms of assembly, efficient DNA binding requires dimerization with another bHLH protein. Homodimer or heterodimer with E proteins such as TCF3. ID1 binds preferentially to TCF3 but does not interact efficiently with TWIST1 so ID1 levels control the amount of TCF3 available to dimerize with TWIST1 and thus determine the type of dimer formed. As to expression, subset of mesodermal cells.

The protein resides in the nucleus. Functionally, acts as a transcriptional regulator. Inhibits myogenesis by sequestrating E proteins, inhibiting trans-activation by MEF2, and inhibiting DNA-binding by MYOD1 through physical interaction. This interaction probably involves the basic domains of both proteins. Also represses expression of pro-inflammatory cytokines such as TNFA and IL1B. Regulates cranial suture patterning and fusion. Activates transcription as a heterodimer with E proteins. Regulates gene expression differentially, depending on dimer composition. Homodimers induce expression of FGFR2 and POSTN while heterodimers repress FGFR2 and POSTN expression and induce THBS1 expression. Heterodimerization is also required for osteoblast differentiation. Represses the activity of the circadian transcriptional activator: NPAS2-BMAL1 heterodimer. The protein is Twist-related protein 1 (Twist1) of Mus musculus (Mouse).